The primary structure comprises 377 residues: Hsc70-interacting protein 2 (377 aa).

Residues 68–123 (AKANEPANAPEDSEDEKSLSDPESDVELDMEGVIEADSDPAQPMGNYSKKATEEEV) form a disordered region. Phosphoserine is present on S80. Acidic residues predominate over residues 89-105 (PESDVELDMEGVIEADS). TPR repeat units lie at residues 126–159 (ASEL…SPGN), 161–193 (LFHA…NSDL), and 195–227 (AGYK…DFDE). Positions 239 to 276 (NAKKIEQHRLKQERRQAERKIKERQRDQRRARKEQEKH) form a coiled coil. The span at 243–277 (IEQHRLKQERRQAERKIKERQRDQRRARKEQEKHN) shows a compositional bias: basic and acidic residues. 2 disordered regions span residues 243 to 302 (IEQH…DILG) and 344 to 377 (DVGA…DGLD). The span at 282 to 293 (GSSGEFSGGNPG) shows a compositional bias: gly residues. The STI1 domain maps to 294 to 336 (NGNMSDILGAMSDPEVSAAIQDILSNPGNITKYASNPKIYNLI). Residues 355–369 (KAGKPSEPKPKKDSA) show a composition bias toward basic and acidic residues.

This sequence belongs to the FAM10 family. As to quaternary structure, homotetramer. Interacts with Hsc70 as well as DNAJ homologs and Hsp90.

The protein resides in the cytoplasm. One HIP oligomer binds the ATPase domains of at least two Hsc70 molecules dependent on activation of the Hsc70 ATPase by Hsp40. Stabilizes the ADP state of Hsc70 that has a high affinity for substrate protein. Through its own chaperone activity, it may contribute to the interaction of Hsc70 with various target proteins. This is Hsc70-interacting protein 2 from Drosophila melanogaster (Fruit fly).